Consider the following 332-residue polypeptide: L-lactate dehydrogenase C chain (332 aa).

Ser2 bears the Blocked amino end (Ser) mark. NAD(+) is bound by residues 29-57 and Arg99; that span reads GNVG…DTNK. Positions 106, 138, and 169 each coordinate substrate. Asn138 provides a ligand contact to NAD(+). The Proton acceptor role is filled by His193. Substrate is bound at residue Thr248.

Belongs to the LDH/MDH superfamily. LDH family. In terms of assembly, homotetramer. Interacts with RABL2/RABL2A; binds preferentially to GTP-bound RABL2. Expressed within the midpiece of sperm tail (at protein level).

It is found in the cytoplasm. It catalyses the reaction (S)-lactate + NAD(+) = pyruvate + NADH + H(+). The protein operates within fermentation; pyruvate fermentation to lactate; (S)-lactate from pyruvate: step 1/1. In terms of biological role, possible role in sperm motility. The polypeptide is L-lactate dehydrogenase C chain (Ldhc) (Mus musculus (Mouse)).